A 137-amino-acid chain; its full sequence is Large ribosomal subunit protein uL16 (137 aa).

A compositionally biased stretch (basic residues) spans 1-16 (MLQPKRTKFRKVHTGR). The segment at 1–22 (MLQPKRTKFRKVHTGRNRGLAQ) is disordered.

This sequence belongs to the universal ribosomal protein uL16 family. In terms of assembly, part of the 50S ribosomal subunit.

Functionally, binds 23S rRNA and is also seen to make contacts with the A and possibly P site tRNAs. The polypeptide is Large ribosomal subunit protein uL16 (Idiomarina loihiensis (strain ATCC BAA-735 / DSM 15497 / L2-TR)).